The chain runs to 331 residues: UPF0284 protein PF0303 (331 aa).

Belongs to the UPF0284 family.

In Pyrococcus furiosus (strain ATCC 43587 / DSM 3638 / JCM 8422 / Vc1), this protein is UPF0284 protein PF0303.